The primary structure comprises 519 residues: Circadian clock oscillator protein KaiC 1 (519 aa).

KaiC domains are found at residues 1–248 and 262–519; these read MNLP…INIF and ARIS…KTAE. 20 residues coordinate ATP: G50, T51, G52, K53, T54, L55, S90, K225, L226, R227, T229, H231, T241, T291, G292, T293, G294, K295, T296, and L297. T54 is a Mg(2+) binding site. T296 is a Mg(2+) binding site. E319 is a Mg(2+) binding site. W332 provides a ligand contact to ATP. S432 bears the Phosphoserine; by autocatalysis mark. A Phosphothreonine; by autocatalysis modification is found at T433. Residues R452, K458, M459, R460, S462, H464, and K466 each contribute to the ATP site.

Belongs to the KaiC family. In terms of assembly, homohexamer; hexamerization is dependent on ATP-binding. Core component of the KaiABC complex, at least composed of a KaiC homohexamer, a KaiB dimer and two KaiA dimers. Interacts directly with SasA. Multimerizes, probably forming homohexamers, no interaction with KaiC2 or KaiC3 is seen. Interacts with KaiA. In another study interacts with itself, KaiB1, KaiB3 and KaiC3. Interacts with SasA (hik8). The cofactor is Mg(2+). Phosphorylated on serine and threonine residues by autocatalysis. Has a 4 step phosphorylation cycle; the autokinase acts first on Thr-433, then Ser-432. When Ser-432 is modified KaiC switches to an autophosphatase mode, acting first on phospho-Thr-433 then phospho-Ser-432.

The enzyme catalyses L-seryl-[protein] + ATP = O-phospho-L-seryl-[protein] + ADP + H(+). It carries out the reaction L-threonyl-[protein] + ATP = O-phospho-L-threonyl-[protein] + ADP + H(+). The catalysed reaction is ATP + H2O = ADP + phosphate + H(+). Its activity is regulated as follows. The interaction with KaiA enhances its phosphorylation status, while the interaction with KaiB decreases it. Component of the oscillator and circadian clock in this organism, enhances fitness in a rhythmic environment. Autophosphorylates in the presence of KaiA, no activity is seen in its absence. In terms of biological role, central component of the KaiABC oscillator complex, which constitutes the main circadian regulator in cyanobacteria. Complex composition changes during the circadian cycle to control KaiC phosphorylation. KaiA stimulates KaiC autophosphorylation, while KaiB sequesters KaiA, leading to KaiC autodephosphorylation. Clock output pathways impact the RpaA transcriptional regulator. KaiC enhances the autophosphorylation activity of SasA, which then transfers its phosphate group to RpaA to activate it. KaiB and KaiC together enhance the phospho-RpaA dephosphatase activity of CikA. Functionally, has a weak, temperature-independent ATPase activity; ATPase activity defines the circadian period. The phosphorylation state of KaiC modulates its ATPase activity and effects KaiB binding. This chain is Circadian clock oscillator protein KaiC 1, found in Synechocystis sp. (strain ATCC 27184 / PCC 6803 / Kazusa).